The chain runs to 397 residues: MSERKLFTSESVSEGHPDKIADQISDAILDAILAEDPDAHVAAETAVYTGSVHVFGEVSTTAYVDINRVVRDTIAEIGYNNAEYGFAAESVGVHPSLIEQSPDIAQGVNESLEVRGTGDQDSLDLIGAGDQGLMFGFAIDETPEFMPLPVSLSHKLVKKLADLRKSGEISYLRPDAKSQVTVEYDENDQPVRVDTVVISTQHDPEATNDQIRQDVIEKVIKAVIPAEYLDEDTKFFINPTGRFVIGGPQGDSGLTGRKIIVDTYGGYSRHGGGAFSGKDATKVDRSASYAARYIAKNIVAAGLAKKAEVQLAYAIGVANPVSVRVDTFGTATVAERKLESAVRDLFDLRPAGIIQMLDLKRPIYRQTAAYGHMGRTDVDLPWEKLDKVDALKAAVEA.

His16 contacts ATP. Asp18 contributes to the Mg(2+) binding site. A K(+)-binding site is contributed by Glu44. Glu57 and Gln100 together coordinate L-methionine. A flexible loop region spans residues 100 to 110 (QSPDIAQGVNE). ATP is bound by residues 175 to 177 (DAK), 242 to 243 (RF), Asp251, 257 to 258 (RK), Ala274, and Lys278. Asp251 provides a ligand contact to L-methionine. L-methionine is bound at residue Lys282.

Belongs to the AdoMet synthase family. In terms of assembly, homotetramer; dimer of dimers. The cofactor is Mg(2+). K(+) serves as cofactor.

Its subcellular location is the cytoplasm. The enzyme catalyses L-methionine + ATP + H2O = S-adenosyl-L-methionine + phosphate + diphosphate. Its pathway is amino-acid biosynthesis; S-adenosyl-L-methionine biosynthesis; S-adenosyl-L-methionine from L-methionine: step 1/1. Its function is as follows. Catalyzes the formation of S-adenosylmethionine (AdoMet) from methionine and ATP. The overall synthetic reaction is composed of two sequential steps, AdoMet formation and the subsequent tripolyphosphate hydrolysis which occurs prior to release of AdoMet from the enzyme. The sequence is that of S-adenosylmethionine synthase from Streptococcus thermophilus (strain ATCC BAA-250 / LMG 18311).